The primary structure comprises 310 residues: Proline-rich 28 kDa antigen (310 aa).

Positions 1–32 (MIQIARTWRVFAGGMATGFIGVVLVTAGKASA) are cleaved as a signal peptide. Residues 278–310 (QAPAPAPGSAPVGLPGQAPGYPPAGTLTPVPPR) are disordered.

The protein to M.leprae ML0031.

In Mycobacterium bovis (strain ATCC BAA-935 / AF2122/97), this protein is Proline-rich 28 kDa antigen (mtc28).